The chain runs to 98 residues: Large ribosomal subunit protein uL23 (98 aa).

It belongs to the universal ribosomal protein uL23 family. Part of the 50S ribosomal subunit. Contacts protein L29, and trigger factor when it is bound to the ribosome.

Functionally, one of the early assembly proteins it binds 23S rRNA. One of the proteins that surrounds the polypeptide exit tunnel on the outside of the ribosome. Forms the main docking site for trigger factor binding to the ribosome. The sequence is that of Large ribosomal subunit protein uL23 from Bordetella bronchiseptica (strain ATCC BAA-588 / NCTC 13252 / RB50) (Alcaligenes bronchisepticus).